We begin with the raw amino-acid sequence, 159 residues long: Insertion element IS136 uncharacterized 16.9 kDa protein (159 aa).

Over residues 126 to 142 the composition is skewed to low complexity; the sequence is RSFVSPSSSTPSTARSS. The disordered stretch occupies residues 126 to 159; it reads RSFVSPSSSTPSTARSSPGRPLPMQAFPAQTCAT.

In Agrobacterium tumefaciens (strain T37), this protein is Insertion element IS136 uncharacterized 16.9 kDa protein.